A 589-amino-acid polypeptide reads, in one-letter code: MADPVYVGGFLVRYDEPPGEAELFLPSGVVDRWLRDCRGPLPLNVNHDESATVGYVAGLQNVRAGLFCLGRVTSPKFLDIVQKASEKSELVSRGPPSESSLRPDGVLEFLSGSYSGLSLSSRRDINAADGAAGDAETACFKHVALCSVGRRRGTLAVYGRQPDWVMERFPDLTEADREALRNQLSGSGEVAAKESAESSAAAAVDPFQSDSYGLLGNSVDALYIQERLPKLRYDKRLVGVTARESYVKASVSPAEQETCDIKVEKERPKEPEQSHVPTESMSHPMSAVATPAASTVAPSQAPLALAHDGVYLPKDAFFSLIGASRPLAEAAGARAAYPAVPPPPAYPVMNYEDPSSRHFDYSAWLRRPAYDAVPPLPPPPVMPMPYRRRDPMMEEAERAAWERGYAPSAYDHYVNNGSWSRSRSGALKRRRERDASSDEEEDMSFPGEADHGKARKRLKAHHGRDNNNSGSDAKGDRYDDIREALQELKREMLAVRQIAPAALLAPAQLATPVASPTTTTSHQAEASEPQASTAAAAPSTASSHGSKSAERGVVNASCRVAPPLEAVNPPKDMVDLNRRLFVAALNKME.

Active-site charge relay system residues include His-47, Ser-118, and His-142. Over residues 264–273 (EKERPKEPEQ) the composition is skewed to basic and acidic residues. The segment at 264 to 283 (EKERPKEPEQSHVPTESMSH) is disordered. Residues 307–326 (HDGVYLPKDAFFSLIGASRP) form an interaction with pAP region. 2 disordered regions span residues 421–478 (RSRS…GDRY) and 514–552 (ASPT…AERG). 2 short sequence motifs (nuclear localization signal) span residues 428-433 (KRRRER) and 453-459 (KARKRLK). The span at 453 to 462 (KARKRLKAHH) shows a compositional bias: basic residues. A compositionally biased stretch (low complexity) spans 514–543 (ASPTTTTSHQAEASEPQASTAAAAPSTASS). The tract at residues 569-589 (PPKDMVDLNRRLFVAALNKME) is interaction with major capsid protein.

This sequence belongs to the herpesviridae capsid scaffolding protein family. Homomultimer. Interacts with major capsid protein. As to quaternary structure, exists in a monomer-dimer equilibrium with the dimer being the active species. In terms of processing, capsid scaffolding protein is cleaved by assemblin after formation of the spherical procapsid. As a result, the capsid obtains its mature, icosahedral shape. Cleavages occur at two or more sites: release (R-site) and maturation (M-site).

The protein resides in the host cytoplasm. The protein localises to the host nucleus. The catalysed reaction is Cleaves -Ala-|-Ser- and -Ala-|-Ala- bonds in the scaffold protein.. In terms of biological role, acts as a scaffold protein by binding major capsid protein in the cytoplasm, inducing the nuclear localization of both proteins. Multimerizes in the nucleus such as major capsid protein forms the icosahedral T=16 capsid. Autocatalytic cleavage releases the assembly protein, and subsequently abolishes interaction with major capsid protein. Cleavages products are evicted from the capsid before or during DNA packaging. Protease that plays an essential role in virion assembly within the nucleus. Catalyzes the cleavage of the assembly protein after formation of the spherical procapsid. By that cleavage, the capsid matures and gains its icosahedral shape. The cleavage sites seem to include -Ala-Ser-, -Ala-Ala-, as well as Ala-Thr bonds. Assemblin and cleavages products are evicted from the capsid before or during DNA packaging. Functionally, plays a major role in capsid assembly. Acts as a scaffold protein by binding major capsid protein. Multimerizes in the nucleus such as major capsid protein forms the icosahedral T=16 capsid. Cleaved by assemblin after capsid completion. The cleavages products are evicted from the capsid before or during DNA packaging. The protein is Capsid scaffolding protein (UL80) of Simian cytomegalovirus (strain Colburn).